Consider the following 257-residue polypeptide: Phycoerythrobilin:ferredoxin oxidoreductase (257 aa).

This sequence belongs to the HY2 family.

It carries out the reaction (3Z)-phycoerythrobilin + oxidized 2[4Fe-4S]-[ferredoxin] = 15,16-dihydrobiliverdin + reduced 2[4Fe-4S]-[ferredoxin] + 2 H(+). Its function is as follows. Catalyzes the two-electron reduction of the C2 and C3(1) diene system of 15,16-dihydrobiliverdin. The protein is Phycoerythrobilin:ferredoxin oxidoreductase of Synechococcus sp. (strain CC9902).